Here is a 253-residue protein sequence, read N- to C-terminus: Probable transcriptional regulatory protein Krad_3057 (253 aa).

The protein belongs to the TACO1 family.

It localises to the cytoplasm. The protein is Probable transcriptional regulatory protein Krad_3057 of Kineococcus radiotolerans (strain ATCC BAA-149 / DSM 14245 / SRS30216).